The following is a 151-amino-acid chain: Small ribosomal subunit protein uS15 (151 aa).

Residues 1-20 (MARLHSGKRGSSGSTKPLRT) form a disordered region.

It belongs to the universal ribosomal protein uS15 family. Part of the 30S ribosomal subunit.

The chain is Small ribosomal subunit protein uS15 from Methanococcus vannielii (strain ATCC 35089 / DSM 1224 / JCM 13029 / OCM 148 / SB).